Here is a 625-residue protein sequence, read N- to C-terminus: tRNA uridine 5-carboxymethylaminomethyl modification enzyme MnmG (625 aa).

FAD contacts are provided by residues 9-14 (GGGHAG), Val121, and Ser177. 271–285 (GPRYCPSIEDKVNRF) serves as a coordination point for NAD(+). Gln368 lines the FAD pocket.

The protein belongs to the MnmG family. In terms of assembly, homodimer. Heterotetramer of two MnmE and two MnmG subunits. FAD serves as cofactor.

The protein resides in the cytoplasm. In terms of biological role, NAD-binding protein involved in the addition of a carboxymethylaminomethyl (cmnm) group at the wobble position (U34) of certain tRNAs, forming tRNA-cmnm(5)s(2)U34. In Aliarcobacter butzleri (strain RM4018) (Arcobacter butzleri), this protein is tRNA uridine 5-carboxymethylaminomethyl modification enzyme MnmG.